The sequence spans 243 residues: VQ motif-containing protein 33 (243 aa).

Over residues 1–16 the composition is skewed to polar residues; it reads MEVSTSSMSSKPEQMQ. The segment at 1–49 is disordered; the sequence is MEVSTSSMSSKPEQMQNPPPMISSPRFQPQIISPHHHDQHQHLSNPYPT. Residues 59-68 carry the VQ motif; the sequence is FKQVVQMLTG. Disordered stretches follow at residues 69 to 98 and 138 to 162; these read SSTD…SIPP and FTGG…SENI. Phosphoserine occurs at positions 83 and 95. Residues 84 to 98 show a composition bias toward polar residues; that stretch reads PVNNNNKGSSFSIPP. The residue at position 139 (threonine 139) is a Phosphothreonine. Phosphoserine is present on residues serine 148, serine 152, serine 165, serine 167, and serine 178. Low complexity predominate over residues 149–162; the sequence is PRFSPRNSSSSENI. A disordered region spans residues 180 to 243; sequence VTPLRSNDDP…FPVASPARNS (64 aa). Threonine 181 is subject to Phosphothreonine. Polar residues predominate over residues 191 to 201; sequence NKSSPLSLGNS. 2 positions are modified to phosphoserine: serine 218 and serine 221. Threonine 222 carries the post-translational modification Phosphothreonine. Serine 238 is modified (phosphoserine).

In terms of processing, phosphorylated on serine and threonine residues by MPK6.

The protein localises to the nucleus. Functionally, may modulate WRKY transcription factor activities. This Arabidopsis thaliana (Mouse-ear cress) protein is VQ motif-containing protein 33.